We begin with the raw amino-acid sequence, 111 residues long: Large ribosomal subunit protein P2B (111 aa).

The disordered stretch occupies residues 62-111 (LASVPSGGAAAGGASASTGAAAGGAAEAEEEKEEEAKEESDDDMGFGLFD). The span at 67-87 (SGGAAAGGASASTGAAAGGAA) shows a compositional bias: low complexity. Over residues 88-105 (EAEEEKEEEAKEESDDDM) the composition is skewed to acidic residues. Serine 101 is subject to Phosphoserine.

It belongs to the eukaryotic ribosomal protein P1/P2 family.

Plays an important role in the elongation step of protein synthesis. The chain is Large ribosomal subunit protein P2B (RPP2B) from Candida albicans (Yeast).